The following is a 505-amino-acid chain: 2,3-bisphosphoglycerate-independent phosphoglycerate mutase (505 aa).

Residues Asp13 and Ser63 each contribute to the Mn(2+) site. Ser63 acts as the Phosphoserine intermediate in catalysis. Substrate contacts are provided by residues His124, 153–154 (RD), Arg183, Arg189, 254–257 (RADR), and Lys330. The Mn(2+) site is built by Asp396, His400, Asp437, His438, and His456.

This sequence belongs to the BPG-independent phosphoglycerate mutase family. In terms of assembly, monomer. It depends on Mn(2+) as a cofactor.

It catalyses the reaction (2R)-2-phosphoglycerate = (2R)-3-phosphoglycerate. The protein operates within carbohydrate degradation; glycolysis; pyruvate from D-glyceraldehyde 3-phosphate: step 3/5. Functionally, catalyzes the interconversion of 2-phosphoglycerate and 3-phosphoglycerate. This Ruegeria pomeroyi (strain ATCC 700808 / DSM 15171 / DSS-3) (Silicibacter pomeroyi) protein is 2,3-bisphosphoglycerate-independent phosphoglycerate mutase.